The following is a 334-amino-acid chain: DNA-directed RNA polymerase subunit alpha (334 aa).

The interval 1–234 is alpha N-terminal domain (alpha-NTD); it reads MQTKVNELLK…SQLAAFVELQ (234 aa). The segment at 248–334 is alpha C-terminal domain (alpha-CTD); the sequence is IDPILLRPVD…LKDQDKKASG (87 aa).

Belongs to the RNA polymerase alpha chain family. In terms of assembly, homodimer. The RNAP catalytic core consists of 2 alpha, 1 beta, 1 beta' and 1 omega subunit. When a sigma factor is associated with the core the holoenzyme is formed, which can initiate transcription.

It carries out the reaction RNA(n) + a ribonucleoside 5'-triphosphate = RNA(n+1) + diphosphate. Its function is as follows. DNA-dependent RNA polymerase catalyzes the transcription of DNA into RNA using the four ribonucleoside triphosphates as substrates. The protein is DNA-directed RNA polymerase subunit alpha of Thioalkalivibrio sulfidiphilus (strain HL-EbGR7).